The primary structure comprises 258 residues: Type III pantothenate kinase (258 aa).

Residue 6–13 (DVGNTNTV) coordinates ATP. Residues Tyr-100 and 107–110 (GADR) contribute to the substrate site. Asp-109 (proton acceptor) is an active-site residue. Asp-129 is a binding site for K(+). Residue Thr-132 participates in ATP binding. Thr-184 lines the substrate pocket.

This sequence belongs to the type III pantothenate kinase family. As to quaternary structure, homodimer. NH4(+) is required as a cofactor. Requires K(+) as cofactor.

It localises to the cytoplasm. The enzyme catalyses (R)-pantothenate + ATP = (R)-4'-phosphopantothenate + ADP + H(+). It participates in cofactor biosynthesis; coenzyme A biosynthesis; CoA from (R)-pantothenate: step 1/5. Functionally, catalyzes the phosphorylation of pantothenate (Pan), the first step in CoA biosynthesis. The sequence is that of Type III pantothenate kinase from Geobacillus thermodenitrificans (strain NG80-2).